A 48-amino-acid polypeptide reads, in one-letter code: Lantibiotic salivaricin-A (48 aa).

Residues 1-26 constitute a propeptide that is removed on maturation; the sequence is MKNSKDILNNAIEEVSEKELMEVAGG. Cross-links (beta-methyllanthionine (Thr-Cys)) lie at residues 35–40 and 37–47; these read TITDDC and TDDCPNSVFVC. A cross-link (lanthionine (Ser-Cys)) is located at residues 43–48; that stretch reads SVFVCC.

This sequence belongs to the type A lantibiotic family. Post-translationally, maturation of lantibiotics involves the enzymatic conversion of Thr, and Ser into dehydrated AA and the formation of thioether bonds with cysteine. This is followed by membrane translocation and cleavage of the modified precursor.

Functionally, lanthionine-containing peptide antibiotic (lantibiotic) active on Gram-positive bacteria. The bactericidal activity of lantibiotics is based on depolarization of energized bacterial cytoplasmic membranes, initiated by the formation of aqueous transmembrane pores. In Streptococcus salivarius, this protein is Lantibiotic salivaricin-A (salA).